Consider the following 220-residue polypeptide: MSFLLHQARFFTTVNHLRDLPPSPQPEVAFAGRSNAGKSTAINILCNQKRLAFASKTPGRTQHINYFSVGPAAEPVANLVDLPGYGYAEVPGAAKAHWEQLLSTYLQTRSQLRGMILMMDSRRPLTELDRRMIEWFAPTGKPIHTLLTKCDKLTRQESVNALRATKKGLDEYRAAGYQGELTAQLFSALKRIGLDEAHELIESWIAPGLAGDPDGPVAAE.

The region spanning 24 to 207 is the EngB-type G domain; the sequence is PQPEVAFAGR…HELIESWIAP (184 aa). GTP is bound by residues 32–39, 59–63, 81–84, 148–151, and 185–188; these read GRSNAGKS, GRTQH, DLPG, TKCD, and LFSA. 2 residues coordinate Mg(2+): Ser-39 and Thr-61.

The protein belongs to the TRAFAC class TrmE-Era-EngA-EngB-Septin-like GTPase superfamily. EngB GTPase family. The cofactor is Mg(2+).

Necessary for normal cell division and for the maintenance of normal septation. The protein is Probable GTP-binding protein EngB of Paraburkholderia phymatum (strain DSM 17167 / CIP 108236 / LMG 21445 / STM815) (Burkholderia phymatum).